A 440-amino-acid chain; its full sequence is UPF0761 membrane protein Rru_A2625 (440 aa).

Transmembrane regions (helical) follow at residues I29–I49, L61–F81, G117–I137, L157–L177, P201–P221, P224–L244, and A264–M284.

The protein belongs to the UPF0761 family.

Its subcellular location is the cell inner membrane. The chain is UPF0761 membrane protein Rru_A2625 from Rhodospirillum rubrum (strain ATCC 11170 / ATH 1.1.1 / DSM 467 / LMG 4362 / NCIMB 8255 / S1).